The following is a 174-amino-acid chain: Male-enhanced antigen 1 (174 aa).

2 disordered regions span residues 1 to 77 and 94 to 123; these read MAAV…PVGD and LHLP…IPMD. Acidic residues-rich tracts occupy residues 38–48, 65–77, and 101–110; these read SSEEPEEEQEE, PEQE…PVGD, and LESEDEDEEG. The residue at position 103 (serine 103) is a Phosphoserine.

Its function is as follows. May play an important role in spermatogenesis and/or testis development. The chain is Male-enhanced antigen 1 (MEA1) from Sus scrofa (Pig).